The sequence spans 100 residues: Urease subunit gamma (100 aa).

Belongs to the urease gamma subunit family. In terms of assembly, heterotrimer of UreA (gamma), UreB (beta) and UreC (alpha) subunits. Three heterotrimers associate to form the active enzyme.

It localises to the cytoplasm. It carries out the reaction urea + 2 H2O + H(+) = hydrogencarbonate + 2 NH4(+). Its pathway is nitrogen metabolism; urea degradation; CO(2) and NH(3) from urea (urease route): step 1/1. In Prochlorococcus marinus (strain MIT 9301), this protein is Urease subunit gamma.